The primary structure comprises 172 residues: Shikimate kinase (172 aa).

11–16 contacts ATP; the sequence is GAGKST. Ser-15 provides a ligand contact to Mg(2+). Substrate is bound by residues Asp-33, Arg-57, and Gly-79. Arg-117 contacts ATP. Position 136 (Arg-136) interacts with substrate. Arg-153 serves as a coordination point for ATP.

The protein belongs to the shikimate kinase family. In terms of assembly, monomer. Mg(2+) is required as a cofactor.

It localises to the cytoplasm. It carries out the reaction shikimate + ATP = 3-phosphoshikimate + ADP + H(+). Its pathway is metabolic intermediate biosynthesis; chorismate biosynthesis; chorismate from D-erythrose 4-phosphate and phosphoenolpyruvate: step 5/7. Catalyzes the specific phosphorylation of the 3-hydroxyl group of shikimic acid using ATP as a cosubstrate. In Pseudomonas paraeruginosa (strain DSM 24068 / PA7) (Pseudomonas aeruginosa (strain PA7)), this protein is Shikimate kinase.